A 375-amino-acid polypeptide reads, in one-letter code: CD2 homolog (375 aa).

The N-terminal stretch at 1 to 16 (MIIILIFLIIPNIVLS) is a signal peptide. Residues 17–207 (IDYWVSFNKT…YLDFFQVASY (191 aa)) are Extracellular-facing. Asn24, Asn80, Asn105, Asn122, Asn134, Asn145, Asn168, Asn176, and Asn183 each carry an N-linked (GlcNAc...) asparagine; by host glycan. 2 cysteine pairs are disulfide-bonded: Cys123-Cys190 and Cys130-Cys173. Residues 208–228 (MFYMIIFIATGIIASIFISII) traverse the membrane as a helical segment. Residues 229-375 (TFLSLRKRKK…ISLIHVDRII (147 aa)) are Cytoplasmic-facing. The segment at 242–278 (EIESPSPSESNEEEQCQHDDTTSIHEPSPREPLLPKP) is disordered. The span at 256-270 (QCQHDDTTSIHEPSP) shows a compositional bias: basic and acidic residues. Repeat copies occupy residues 305-310 (KLCPPP), 311-316 (KPCPPP), 317-322 (KPCPPP), 323-328 (KPCPPP), and 329-334 (KPCPSS). Residues 305–334 (KLCPPPKPCPPPKPCPPPKPCPPPKPCPSS) are 5 X 6 AA tandem repeats of K-[LP]-C-[PRS]-[PS]-[PS]. A disordered region spans residues 323 to 350 (KPCPPPKPCPSSESCSPPESYSLPKPLP). Over residues 332-346 (PSSESCSPPESYSLP) the composition is skewed to low complexity.

It belongs to the asfivirus CD2 homolog protein family. In terms of assembly, both glycosylated and nonglycosylated forms interact (via C-terminus) with the host AP-1 complex. In terms of processing, cleaved into two fragments of 63 kDa and 26 kDa containing respectively the glycosylated N-terminus and the nonglycosylated C-terminus. A full-length 89-kDa glycosylated form also exists.

The protein resides in the host membrane. The protein localises to the virion membrane. Its subcellular location is the host Golgi apparatus. In terms of biological role, may play an immunosuppressive role by inhibiting lymphocyte proliferation and subsequently facilitating viral replication and generalization of infection. Responsible for viral hemadsorption, which may help viral spread. Increases virus replication in the tick vector at the step of virus uptake or replication in the tick gut. May play a role in the host Golgi reorganization to yield viral factories. May play a role in host cell penetration. This is CD2 homolog from Ornithodoros (relapsing fever ticks).